The primary structure comprises 753 residues: 5-methyltetrahydropteroyltriglutamate--homocysteine methyltransferase (753 aa).

5-methyltetrahydropteroyltri-L-glutamate is bound by residues 17–20 (RELK) and lysine 117. Residues 431-433 (IGS) and glutamate 484 each bind L-homocysteine. Residues 431–433 (IGS) and glutamate 484 contribute to the L-methionine site. 5-methyltetrahydropteroyltri-L-glutamate is bound by residues 515–516 (RC) and tryptophan 561. Aspartate 599 is a binding site for L-homocysteine. Aspartate 599 contributes to the L-methionine binding site. Glutamate 605 contributes to the 5-methyltetrahydropteroyltri-L-glutamate binding site. The Zn(2+) site is built by histidine 641, cysteine 643, and glutamate 665. The Proton donor role is filled by histidine 694. Cysteine 726 contacts Zn(2+).

Belongs to the vitamin-B12 independent methionine synthase family. It depends on Zn(2+) as a cofactor.

It carries out the reaction 5-methyltetrahydropteroyltri-L-glutamate + L-homocysteine = tetrahydropteroyltri-L-glutamate + L-methionine. The protein operates within amino-acid biosynthesis; L-methionine biosynthesis via de novo pathway; L-methionine from L-homocysteine (MetE route): step 1/1. Functionally, catalyzes the transfer of a methyl group from 5-methyltetrahydrofolate to homocysteine resulting in methionine formation. The chain is 5-methyltetrahydropteroyltriglutamate--homocysteine methyltransferase from Shigella flexneri serotype 5b (strain 8401).